Here is a 256-residue protein sequence, read N- to C-terminus: PGL/p-HBAD biosynthesis glycosyltransferase Mb2981 (256 aa).

It belongs to the glycosyltransferase 2 family.

In terms of biological role, involved in glycosylation steps downstream of mono-O-methyl-glycosyl-p-hydroxybenzoic acid derivative (p-HBAD I) and 2-O-methyl-rhamnosyl-phenolphthiocerol dimycocerosate (mycoside B) during the p-hydroxybenzoic acid derivatives (p-HBAD) and glycosylated phenolphthiocerol dimycocerosates (PGL) biosynthesis. The chain is PGL/p-HBAD biosynthesis glycosyltransferase Mb2981 from Mycobacterium bovis (strain ATCC BAA-935 / AF2122/97).